A 376-amino-acid polypeptide reads, in one-letter code: Chaperone protein DnaJ (376 aa).

A J domain is found at 4–68; that stretch reads DYYEILGVAR…ETRARYDRFG (65 aa). Residues 102–121 are disordered; the sequence is GGMGGPTQQRRRGGPARGDD. A CR-type zinc finger spans residues 136–218; sequence GGEKEIRISH…CDGKGTNQVT (83 aa). Zn(2+) contacts are provided by Cys-149, Cys-152, Cys-166, Cys-169, Cys-192, Cys-195, Cys-206, and Cys-209. CXXCXGXG motif repeat units lie at residues 149–156, 166–173, 192–199, and 206–213; these read CETCSGSG, CSTCSGSG, CPTCNGTG, and CDACDGKG.

The protein belongs to the DnaJ family. Homodimer. Zn(2+) serves as cofactor.

It is found in the cytoplasm. Its function is as follows. Participates actively in the response to hyperosmotic and heat shock by preventing the aggregation of stress-denatured proteins and by disaggregating proteins, also in an autonomous, DnaK-independent fashion. Unfolded proteins bind initially to DnaJ; upon interaction with the DnaJ-bound protein, DnaK hydrolyzes its bound ATP, resulting in the formation of a stable complex. GrpE releases ADP from DnaK; ATP binding to DnaK triggers the release of the substrate protein, thus completing the reaction cycle. Several rounds of ATP-dependent interactions between DnaJ, DnaK and GrpE are required for fully efficient folding. Also involved, together with DnaK and GrpE, in the DNA replication of plasmids through activation of initiation proteins. The polypeptide is Chaperone protein DnaJ (Trichormus variabilis (strain ATCC 29413 / PCC 7937) (Anabaena variabilis)).